The chain runs to 507 residues: Dihydrolipoyl dehydrogenase 1, mitochondrial (507 aa).

The transit peptide at 1–36 directs the protein to the mitochondrion; it reads MAMASLARRKAYFLTRNLSNSPTDALRFSFSLSRGF. FAD is bound by residues 73-82, Lys-91, Gly-155, and 184-186; these read EKRGALGGTC and TGS. A disulfide bond links Cys-82 and Cys-87. NAD(+)-binding positions include 221–228, Glu-244, Val-278, and Gly-313; that span reads GAGYIGLE. Residues Asp-354 and 360–363 each bind FAD; that span reads MLAH. His-486 functions as the Proton acceptor in the catalytic mechanism.

Belongs to the class-I pyridine nucleotide-disulfide oxidoreductase family. As to quaternary structure, homodimer. Part of both the glycine cleavage system composed of four proteins: P, T, L and H and of the pyruvate dehydrogenase complex containing multiple copies of three enzymatic components: pyruvate dehydrogenase (E1), dihydrolipoamide acetyltransferase (E2) and lipoamide dehydrogenase (E3). FAD serves as cofactor. Post-translationally, S-nytrosylated at unknown positions. Preferentially expressed in leaves, flowers and siliques and at a lower level in roots and stems.

The protein localises to the mitochondrion matrix. The enzyme catalyses N(6)-[(R)-dihydrolipoyl]-L-lysyl-[protein] + NAD(+) = N(6)-[(R)-lipoyl]-L-lysyl-[protein] + NADH + H(+). Lipoamide dehydrogenase is a component of the glycine decarboxylase (GDC) or glycine cleavage system as well as of the alpha-ketoacid dehydrogenase complexes. LPD1 is probably the protein most often associated with the glycine decarboxylase complex while LPD2 is probably incorporated into alpha-ketoacid dehydrogenase complexes. This Arabidopsis thaliana (Mouse-ear cress) protein is Dihydrolipoyl dehydrogenase 1, mitochondrial (LPD1).